Consider the following 179-residue polypeptide: ATP synthase subunit delta (179 aa).

This sequence belongs to the ATPase delta chain family. In terms of assembly, F-type ATPases have 2 components, F(1) - the catalytic core - and F(0) - the membrane proton channel. F(1) has five subunits: alpha(3), beta(3), gamma(1), delta(1), epsilon(1). F(0) has three main subunits: a(1), b(2) and c(10-14). The alpha and beta chains form an alternating ring which encloses part of the gamma chain. F(1) is attached to F(0) by a central stalk formed by the gamma and epsilon chains, while a peripheral stalk is formed by the delta and b chains.

The protein localises to the cell membrane. F(1)F(0) ATP synthase produces ATP from ADP in the presence of a proton or sodium gradient. F-type ATPases consist of two structural domains, F(1) containing the extramembraneous catalytic core and F(0) containing the membrane proton channel, linked together by a central stalk and a peripheral stalk. During catalysis, ATP synthesis in the catalytic domain of F(1) is coupled via a rotary mechanism of the central stalk subunits to proton translocation. In terms of biological role, this protein is part of the stalk that links CF(0) to CF(1). It either transmits conformational changes from CF(0) to CF(1) or is implicated in proton conduction. This Clostridium perfringens (strain ATCC 13124 / DSM 756 / JCM 1290 / NCIMB 6125 / NCTC 8237 / Type A) protein is ATP synthase subunit delta.